The primary structure comprises 385 residues: T-box transcription factor TBX10 (385 aa).

The segment at 22–61 (TTSSGWEPRLGSPFPSGPCTSSTGAQAVAEPTGQGPKNPR) is disordered. A DNA-binding region (T-box) is located at residues 69–252 (LEMKPLWEEF…SNPFAKGFRE (184 aa)).

The protein resides in the nucleus. Probable transcriptional regulator involved in developmental processes. The protein is T-box transcription factor TBX10 (TBX10) of Homo sapiens (Human).